The chain runs to 305 residues: Ornithine carbamoyltransferase (305 aa).

Carbamoyl phosphate-binding positions include 47-50 (STRT), Arg98, and 125-128 (HPCQ). L-ornithine is bound by residues Asn156, Asp221, and 225–226 (SM). Residues 262 to 263 (CL) and Arg290 contribute to the carbamoyl phosphate site.

Belongs to the aspartate/ornithine carbamoyltransferase superfamily. OTCase family.

The protein localises to the cytoplasm. It catalyses the reaction carbamoyl phosphate + L-ornithine = L-citrulline + phosphate + H(+). Its pathway is amino-acid biosynthesis; L-arginine biosynthesis; L-arginine from L-ornithine and carbamoyl phosphate: step 1/3. In terms of biological role, reversibly catalyzes the transfer of the carbamoyl group from carbamoyl phosphate (CP) to the N(epsilon) atom of ornithine (ORN) to produce L-citrulline. The protein is Ornithine carbamoyltransferase of Methanococcus vannielii (strain ATCC 35089 / DSM 1224 / JCM 13029 / OCM 148 / SB).